Reading from the N-terminus, the 752-residue chain is Translation initiation factor IF-2 (752 aa).

The segment covering 148–159 (KKVKDKNKKEEP) has biased composition (basic and acidic residues). The interval 148 to 170 (KKVKDKNKKEEPAVTPSTAPRKK) is disordered. One can recognise a tr-type G domain in the interval 250–419 (PRPPIVTVMG…ALQAEIMELK (170 aa)). Residues 259–266 (GHVDHGKT) form a G1 region. 259 to 266 (GHVDHGKT) contributes to the GTP binding site. Residues 284–288 (GITQH) are G2. The tract at residues 305–308 (DTPG) is G3. Residues 305 to 309 (DTPGH) and 359 to 362 (NKID) contribute to the GTP site. The segment at 359–362 (NKID) is G4. Positions 395–397 (SAK) are G5.

It belongs to the TRAFAC class translation factor GTPase superfamily. Classic translation factor GTPase family. IF-2 subfamily.

The protein resides in the cytoplasm. Its function is as follows. One of the essential components for the initiation of protein synthesis. Protects formylmethionyl-tRNA from spontaneous hydrolysis and promotes its binding to the 30S ribosomal subunits. Also involved in the hydrolysis of GTP during the formation of the 70S ribosomal complex. The sequence is that of Translation initiation factor IF-2 from Thermodesulfovibrio yellowstonii (strain ATCC 51303 / DSM 11347 / YP87).